Here is a 480-residue protein sequence, read N- to C-terminus: Adenosylhomocysteinase (480 aa).

Substrate-binding residues include Thr63, Asp142, and Glu203. NAD(+) is bound at residue 204–206 (TTT). Substrate is bound by residues Lys233 and Asp237. Residues Asn238, 267–272 (GYGDVG), Glu290, Asn325, 346–348 (IGH), and Asn394 contribute to the NAD(+) site.

It belongs to the adenosylhomocysteinase family. It depends on NAD(+) as a cofactor.

It is found in the cytoplasm. It catalyses the reaction S-adenosyl-L-homocysteine + H2O = L-homocysteine + adenosine. Its pathway is amino-acid biosynthesis; L-homocysteine biosynthesis; L-homocysteine from S-adenosyl-L-homocysteine: step 1/1. Its function is as follows. May play a key role in the regulation of the intracellular concentration of adenosylhomocysteine. The chain is Adenosylhomocysteinase from Xylella fastidiosa (strain 9a5c).